Consider the following 82-residue polypeptide: RNA-binding protein Hfq (82 aa).

The region spanning 10-70 (DIFLNGARKN…LSTITPSKAI (61 aa)) is the Sm domain.

Belongs to the Hfq family. Homohexamer.

Functionally, RNA chaperone that binds small regulatory RNA (sRNAs) and mRNAs to facilitate mRNA translational regulation in response to envelope stress, environmental stress and changes in metabolite concentrations. Also binds with high specificity to tRNAs. The chain is RNA-binding protein Hfq from Clostridium kluyveri (strain NBRC 12016).